The chain runs to 75 residues: MSKLGVLLTICLLLFPLTALPMDGDQPVDRLAERMQDNISSEQHTFFEKRLPSCCSLNLRLCPVPACKRNPCCTG.

An N-terminal signal peptide occupies residues 1 to 19 (MSKLGVLLTICLLLFPLTA). The propeptide occupies 20–50 (LPMDGDQPVDRLAERMQDNISSEQHTFFEKR). 4-hydroxyproline is present on residues Pro-52, Pro-63, Pro-65, and Pro-71. 3 cysteine pairs are disulfide-bonded: Cys-54/Cys-67, Cys-55/Cys-72, and Cys-62/Cys-73. Threonine amide is present on Thr-74.

This sequence belongs to the conotoxin M superfamily. Expressed by the venom duct.

The protein resides in the secreted. Kappa-conotoxins inhibits voltage-gated potassium channels (Kv). This synthetic toxin reversibly inhibits the insect potassium channel Shaker K+, the teleost homolog TSha1 and the mammalian Kv1.2/KCNA2 channel. Interacts with the pore region of the insect channel, in a state-dependent manner. Causes seizure when intracerebrovascularly injected into mice. Is also toxic when intrathecally injected into mice, but shows no visible effects by intraperitoneal injection. Shows protective effects on cardiac tissue when administered after an ischemic event. This chain is Kappa-conotoxin RIIIK, found in Conus radiatus (Rayed cone).